Here is a 321-residue protein sequence, read N- to C-terminus: 2,3,4,5-tetrahydropyridine-2,6-dicarboxylate N-succinyltransferase (321 aa).

Mg(2+) is bound by residues Asp-166 and Glu-183. The active-site Acyl-anhydride intermediate is Glu-199. Succinyl-CoA is bound by residues Arg-201, Gly-216, Ser-219, Ala-242, 257-258 (EA), Gly-265, Lys-281, and 294-297 (RRNS).

Belongs to the type 2 tetrahydrodipicolinate N-succinyltransferase family. Homotrimer.

The protein resides in the cytoplasm. The catalysed reaction is (S)-2,3,4,5-tetrahydrodipicolinate + succinyl-CoA + H2O = (S)-2-succinylamino-6-oxoheptanedioate + CoA. The protein operates within amino-acid biosynthesis; L-lysine biosynthesis via DAP pathway; LL-2,6-diaminopimelate from (S)-tetrahydrodipicolinate (succinylase route): step 1/3. In terms of biological role, catalyzes the conversion of the cyclic tetrahydrodipicolinate (THDP) into the acyclic N-succinyl-L-2-amino-6-oxopimelate using succinyl-CoA. The protein is 2,3,4,5-tetrahydropyridine-2,6-dicarboxylate N-succinyltransferase of Rothia mucilaginosa (strain DY-18) (Stomatococcus mucilaginosus).